A 376-amino-acid chain; its full sequence is MSSLPADSRIDFAGSPRPTVGVEWEFALVDAKTRELSNEAAAVIAEIGENPHVHKELLRNTVEIVTGICENSGEAMGDLCDTLSTVRRAVRGRGMELFCAGTHPFGKWSAAQLTDAPRYAELIKRTQWWGRQMLIWGVHVHVGVSSAHKVMPIISSLLNQYPHLLALSASSPFWDGEDTGYASNRAMMFQQLPTAGLPFQFQTWHEFEGFVHDQKKTGIIDHLSEIRWDIRPSPQLGTVEVRIFDGVSNVRELSALVALTHCLIVDLDRRLDAGEQLPVMPPWHVQENKWRAARYGLDAVIILDADSNERLVTEDLDDLLNHLEPVAASLHCADELAAVEDIYRLGGSYQRQRRVAEENDGDLREVVDALIGELEL.

The protein belongs to the glutamate--cysteine ligase type 2 family. YbdK subfamily.

It catalyses the reaction L-cysteine + L-glutamate + ATP = gamma-L-glutamyl-L-cysteine + ADP + phosphate + H(+). Functionally, ATP-dependent carboxylate-amine ligase which exhibits weak glutamate--cysteine ligase activity. The protein is Putative glutamate--cysteine ligase 2-1 of Mycolicibacterium smegmatis (strain ATCC 700084 / mc(2)155) (Mycobacterium smegmatis).